Here is a 177-residue protein sequence, read N- to C-terminus: Protein OPG036 (177 aa).

The protein belongs to the poxviridae OPG036 family.

It localises to the host nucleus. In terms of biological role, plays a role in the inhibition of host innate immune response. Within the host nucleus, inhibits activation of interferon-beta promoter by inhibiting IRF3 activation. The polypeptide is Protein OPG036 (OPG036) (Homo sapiens (Human)).